Reading from the N-terminus, the 775-residue chain is BLOC-2 complex member HPS6 (775 aa).

In terms of assembly, component of the biogenesis of lysosome-related organelles complex-2 (or BLOC2) composed of HPS3, HPS5 and HPS6. Interacts with HPS5 and HPS3. Interacts with biogenesis of lysosome-related organelles complex-1 (BLOC1). Interacts with AP-3 complex. Interacts with MNAT1. Interacts with DCTN1 and dynein intermediate chain. In terms of tissue distribution, ubiquitous.

It localises to the microsome membrane. The protein resides in the cytoplasm. It is found in the cytosol. Its subcellular location is the early endosome membrane. The protein localises to the lysosome membrane. Its function is as follows. May regulate the synthesis and function of lysosomes and of highly specialized organelles, such as melanosomes and platelet dense granules. Acts as a cargo adapter for the dynein-dynactin motor complex to mediate the transport of lysosomes from the cell periphery to the perinuclear region. Facilitates retrograde lysosomal trafficking by linking the motor complex to lysosomes, and perinuclear positioning of lysosomes is crucial for the delivery of endocytic cargos to lysosomes, for lysosome maturation and functioning. The protein is BLOC-2 complex member HPS6 (HPS6) of Homo sapiens (Human).